The primary structure comprises 204 residues: Crossover junction endodeoxyribonuclease RuvC (204 aa).

Catalysis depends on residues D7, E68, and D141. 3 residues coordinate Mg(2+): D7, E68, and D141.

Belongs to the RuvC family. Homodimer which binds Holliday junction (HJ) DNA. The HJ becomes 2-fold symmetrical on binding to RuvC with unstacked arms; it has a different conformation from HJ DNA in complex with RuvA. In the full resolvosome a probable DNA-RuvA(4)-RuvB(12)-RuvC(2) complex forms which resolves the HJ. Requires Mg(2+) as cofactor.

It localises to the cytoplasm. It catalyses the reaction Endonucleolytic cleavage at a junction such as a reciprocal single-stranded crossover between two homologous DNA duplexes (Holliday junction).. The RuvA-RuvB-RuvC complex processes Holliday junction (HJ) DNA during genetic recombination and DNA repair. Endonuclease that resolves HJ intermediates. Cleaves cruciform DNA by making single-stranded nicks across the HJ at symmetrical positions within the homologous arms, yielding a 5'-phosphate and a 3'-hydroxyl group; requires a central core of homology in the junction. The consensus cleavage sequence is 5'-(A/T)TT(C/G)-3'. Cleavage occurs on the 3'-side of the TT dinucleotide at the point of strand exchange. HJ branch migration catalyzed by RuvA-RuvB allows RuvC to scan DNA until it finds its consensus sequence, where it cleaves and resolves the cruciform DNA. The protein is Crossover junction endodeoxyribonuclease RuvC of Clavibacter sepedonicus (Clavibacter michiganensis subsp. sepedonicus).